Consider the following 414-residue polypeptide: WW domain-containing oxidoreductase (414 aa).

Residues Met-1 to Glu-23 form a disordered region. A WW 1 domain is found at Glu-16–Ser-49. The Nuclear localization signal signature appears at Gly-50–Val-55. The 34-residue stretch at Gly-57–Leu-90 folds into the WW 2 domain. Gly-131–Gly-137 contributes to the NADP(+) binding site. A substrate-binding site is contributed by Ser-260. The Proton acceptor role is filled by Tyr-293.

This sequence belongs to the short-chain dehydrogenases/reductases (SDR) family.

Its subcellular location is the cytoplasm. The protein resides in the mitochondrion. It is found in the golgi apparatus. It localises to the lysosome. Functionally, putative oxidoreductase. Acts as a tumor suppressor and plays a role in apoptosis. May function synergistically with p53/TP53 to control genotoxic stress-induced cell death. Plays a role in TGFB1 signaling and TGFB1-mediated cell death. May also play a role in tumor necrosis factor (TNF)-mediated cell death. Required for normal bone development. Inhibits Wnt signaling. The polypeptide is WW domain-containing oxidoreductase (WWOX) (Gallus gallus (Chicken)).